The primary structure comprises 639 residues: Signal recognition particle receptor subunit alpha (639 aa).

Residues 132–317 (APTTMKKFED…STKPSATKGT (186 aa)) form a disordered region. 2 stretches are compositionally biased toward basic and acidic residues: residues 137–146 (KKFEDSEKAK) and 153–165 (IETR…EKAK). Ser178 bears the Phosphoserine mark. Positions 204-240 (ELSKEEQIRRKREEFIQKHGRGMEKSSKSSKSDAPKE) are enriched in basic and acidic residues. Phosphothreonine is present on Thr285. Phosphoserine is present on residues Ser297, Ser298, and Ser299. Over residues 305-315 (AQNSTKPSATK) the composition is skewed to polar residues. Residues 420-637 (YVVTFCGVNG…NAKAVVAALM (218 aa)) form an NG domain region. Position 426–433 (426–433 (GVNGVGKS)) interacts with GTP. Position 474 is a phosphoserine (Ser474). GTP is bound at residue 521-525 (DTAGR). Thr579 is modified (phosphothreonine). GTP is bound at residue 589-592 (TKFD).

The protein belongs to the GTP-binding SRP family. Heterodimer with SRPRB. Interacts with the signal recognition particle (SRP) complex subunit SRP54.

The protein localises to the endoplasmic reticulum membrane. Component of the SRP (signal recognition particle) receptor. Ensures, in conjunction with the signal recognition particle, the correct targeting of the nascent secretory proteins to the endoplasmic reticulum membrane system. Forms a guanosine 5'-triphosphate (GTP)-dependent complex with the SRP subunit SRP54. SRP receptor compaction and GTPase rearrangement drive SRP-mediated cotranslational protein translocation into the ER. This chain is Signal recognition particle receptor subunit alpha, found in Bos taurus (Bovine).